The chain runs to 60 residues: L-amino-acid oxidase (60 aa).

Residue 1–4 coordinates FAD; it reads GPMR. Residue arginine 4 participates in substrate binding.

The protein belongs to the flavin monoamine oxidase family. FIG1 subfamily. Homodimer; non-covalently linked. Requires FAD as cofactor. In terms of processing, contains 2 disulfide bonds. N-glycosylated. As to expression, expressed by the venom gland.

It localises to the secreted. The catalysed reaction is an L-alpha-amino acid + O2 + H2O = a 2-oxocarboxylate + H2O2 + NH4(+). Functionally, catalyzes an oxidative deamination of predominantly hydrophobic and aromatic L-amino acids, thus producing hydrogen peroxide that may contribute to the diverse toxic effects of this enzyme. Exhibits diverse biological activities, such as hemorrhage, hemolysis, edema, apoptosis of vascular endothelial cells or tumor cell lines, antibacterial and antiparasitic activities, as well as regulation of platelet aggregation. Effects of snake L-amino oxidases on platelets are controversial, since they either induce aggregation or inhibit agonist-induced aggregation. These different effects are probably due to different experimental conditions. This is L-amino-acid oxidase from Bitis gabonica (Gaboon adder).